Here is a 443-residue protein sequence, read N- to C-terminus: Endothelin receptor type B (443 aa).

Residues 1–26 (MQPLPTLCGRVLVALILACGVAGVQG) form the signal peptide. At 27-102 (EERRFPPARA…RTIEIKETFK (76 aa)) the chain is on the extracellular side. Residues 51-62 (TKTSWPTGSNAS) show a composition bias toward polar residues. The segment at 51–89 (TKTSWPTGSNASVPRLSAPPQMPKAGRTAGAQRRTLPPP) is disordered. Asn-60 is a glycosylation site (N-linked (GlcNAc...) asparagine). The chain crosses the membrane as a helical span at residues 103–127 (YINTVVSCLVFVLGIIGNSTLLRII). Over 128–138 (YKNKCMRNGPN) the chain is Cytoplasmic. A helical transmembrane segment spans residues 139–164 (ILIASLALGDLLHIIIDIPINVYKLL). Over 165–176 (AEDWPFGVEMCK) the chain is Extracellular. Cys-175 and Cys-256 are joined by a disulfide. A helical membrane pass occupies residues 177-198 (LVPFIQKASVGITVLSLCALSI). At 199 to 219 (DRYRAVASWSRIKGIGVPKWT) the chain is on the cytoplasmic side. Residues 220 to 244 (AVEIVLIWVVSVVLAVPEAVGFDMI) form a helical membrane-spanning segment. The Extracellular segment spans residues 245 to 272 (TADYKGSYLRICLLHPTQKTAFMQFYKN). A helical transmembrane segment spans residues 273 to 297 (AKDWWLFSFYFCLPLAITAFFYTLE). Topologically, residues 298–325 (TCEMLRKKSGMQIALNDHLKQRREVAKT) are cytoplasmic. Ser-306 is modified (phosphoserine). The helical transmembrane segment at 326–351 (VFCLVLVFALCWLPLHLSRILKHTLY) threads the bilayer. At 352-363 (DQNDPHRCELLS) the chain is on the extracellular side. The chain crosses the membrane as a helical span at residues 364 to 390 (FLLVLEYIGINMASLNSCINPIALYLV). Topologically, residues 391–443 (SKRFKNCFKWCLCCWCQSFEEKQSLEDKQSCLKFKANDHGYDNFRSSNKYSSS) are cytoplasmic. Residues Cys-403, Cys-404, and Cys-406 are each lipidated (S-palmitoyl cysteine). The residue at position 420 (Ser-420) is a Phosphoserine. At Tyr-440 the chain carries Phosphotyrosine. Residues Ser-441, Ser-442, and Ser-443 each carry the phosphoserine modification.

Belongs to the G-protein coupled receptor 1 family. Endothelin receptor subfamily. EDNRB sub-subfamily.

The protein localises to the cell membrane. Its function is as follows. Non-specific receptor for endothelin 1, 2, and 3. Mediates its action by association with G proteins that activate a phosphatidylinositol-calcium second messenger system. The protein is Endothelin receptor type B (EDNRB) of Equus caballus (Horse).